The following is a 324-amino-acid chain: NAD kinase (324 aa).

D89 (proton acceptor) is an active-site residue. Residues 89 to 90 (DG), R94, 163 to 164 (NE), D193, and 204 to 209 (TAYAFS) each bind NAD(+).

Belongs to the NAD kinase family. A divalent metal cation serves as cofactor.

It is found in the cytoplasm. It catalyses the reaction NAD(+) + ATP = ADP + NADP(+) + H(+). Involved in the regulation of the intracellular balance of NAD and NADP, and is a key enzyme in the biosynthesis of NADP. Catalyzes specifically the phosphorylation on 2'-hydroxyl of the adenosine moiety of NAD to yield NADP. The polypeptide is NAD kinase (Nocardia farcinica (strain IFM 10152)).